The following is a 414-amino-acid chain: Serine hydroxymethyltransferase (414 aa).

Residues L121 and 125 to 127 each bind (6S)-5,6,7,8-tetrahydrofolate; that span reads GHL. The residue at position 229 (K229) is an N6-(pyridoxal phosphate)lysine.

Belongs to the SHMT family. In terms of assembly, homodimer. The cofactor is pyridoxal 5'-phosphate.

It localises to the cytoplasm. It carries out the reaction (6R)-5,10-methylene-5,6,7,8-tetrahydrofolate + glycine + H2O = (6S)-5,6,7,8-tetrahydrofolate + L-serine. Its pathway is one-carbon metabolism; tetrahydrofolate interconversion. It participates in amino-acid biosynthesis; glycine biosynthesis; glycine from L-serine: step 1/1. Functionally, catalyzes the reversible interconversion of serine and glycine with tetrahydrofolate (THF) serving as the one-carbon carrier. This reaction serves as the major source of one-carbon groups required for the biosynthesis of purines, thymidylate, methionine, and other important biomolecules. Also exhibits THF-independent aldolase activity toward beta-hydroxyamino acids, producing glycine and aldehydes, via a retro-aldol mechanism. In Polynucleobacter necessarius subsp. necessarius (strain STIR1), this protein is Serine hydroxymethyltransferase.